A 440-amino-acid chain; its full sequence is MSIVSFCSSLPAGPHGFKHGRGTRDMVHMPCIVRRTARSPAQACRLLRWNKYHCAAVPTNSSLSPSPTPLDVEIELDLEPFLIKYKSGRIERLGRFGDRTDYVEASLDPATEVTSRDAITDTGVPVRIYLPKVDDSPPNSLRVLVYFHGGAFLVEDSASPPYHNYLNNLASKANILIVSVNYRLAPEYPLPVAYDDCMEALNWVNKHSDGTGQEDWINKHGDFDHLFISGDSAGGNITHNIAMSTDAPKNIEGIALVHPYFFGKVALETELQDPTNLLLHRKLWSFITPESEGLDDPRVNPLGPTAPSLEKIKCKRAVVFVAGEDFHSERGRKYSEKLKSEFKGEVPLLCNHDGVGHVYHLSVDATEEEIESAAAWKMMTDLLKFYKDNDVVLEGSIVESLKAKTTEGIKKMKEIEKGMSERMMEQLVAFYNGKPVPYSS.

The N-terminal 58 residues, 1–58, are a transit peptide targeting the amyloplast; sequence MSIVSFCSSLPAGPHGFKHGRGTRDMVHMPCIVRRTARSPAQACRLLRWNKYHCAAVP. Ser-232 serves as the catalytic Acyl-ester intermediate. Active-site charge relay system residues include Asp-325 and His-357.

The protein belongs to the AB hydrolase superfamily. In terms of assembly, homodimer. Not glycosylated. In terms of tissue distribution, expressed in the pollen grains.

It is found in the plastid. It localises to the amyloplast. The catalysed reaction is 6-tuliposide B = tulipalin B + D-glucose. With respect to regulation, inhibited by Ag(+), Cu(2+), Fe(2+), Hg(2+), V(3+) and phenylmethylsulfonyl fluoride (PMSF). Functionally, lactone-forming carboxylesterase, specifically catalyzing intramolecular transesterification, but not hydrolysis. Involved in the biosynthesis of tulipalins, defensive chemicals that show antimicrobial activities against a broad range of strains of bacteria and fungi. Substrates are 6-tuliposide B &gt; 6-tuliposide A. In Tulipa gesneriana (Garden tulip), this protein is Tuliposide B-converting enzyme 1, amyloplastic.